The chain runs to 372 residues: NAD(P)H-quinone oxidoreductase subunit 1 (372 aa).

The next 8 membrane-spanning stretches (helical) occupy residues 29-49, 97-117, 128-148, 176-196, 204-224, 254-274, 308-328, and 351-371; these read WLPFPMLLMIVVATVGVLVTV, LLFTLGPVIVAVPVFLSYLVV, LGVAIFLWIALSSIQPIGLLM, LALAVLAVAMMSNSLSTIDIV, ILGWNIWRQPLGFIIFWIAVL, FALYYLASYVNLVLSSLLVAV, TLGIIMTLLKTYLLVFIAVLL, and VALVNLLLTAALKLTFPFAFG.

It belongs to the complex I subunit 1 family. In terms of assembly, NDH-1 is composed of at least 11 different subunits.

It localises to the cellular thylakoid membrane. It catalyses the reaction a plastoquinone + NADH + (n+1) H(+)(in) = a plastoquinol + NAD(+) + n H(+)(out). The catalysed reaction is a plastoquinone + NADPH + (n+1) H(+)(in) = a plastoquinol + NADP(+) + n H(+)(out). In terms of biological role, NDH-1 shuttles electrons from an unknown electron donor, via FMN and iron-sulfur (Fe-S) centers, to quinones in the respiratory and/or the photosynthetic chain. The immediate electron acceptor for the enzyme in this species is believed to be plastoquinone. Couples the redox reaction to proton translocation, and thus conserves the redox energy in a proton gradient. In Trichodesmium erythraeum (strain IMS101), this protein is NAD(P)H-quinone oxidoreductase subunit 1.